We begin with the raw amino-acid sequence, 272 residues long: Bis(5'-nucleosyl)-tetraphosphatase, symmetrical (272 aa).

Belongs to the Ap4A hydrolase family.

The enzyme catalyses P(1),P(4)-bis(5'-adenosyl) tetraphosphate + H2O = 2 ADP + 2 H(+). Its function is as follows. Hydrolyzes diadenosine 5',5'''-P1,P4-tetraphosphate to yield ADP. This Glaesserella parasuis serovar 5 (strain SH0165) (Haemophilus parasuis) protein is Bis(5'-nucleosyl)-tetraphosphatase, symmetrical.